The chain runs to 576 residues: Alpha-1,3-arabinosyltransferase XAT3 (576 aa).

The Cytoplasmic segment spans residues 1–19; the sequence is MKAGERPKLVRGVRQESRR. Residues 20-40 traverse the membrane as a helical; Signal-anchor for type II membrane protein segment; that stretch reads FRLLVIVVGFFLVSLTFVFVS. Topologically, residues 41–576 are lumenal; the sequence is KPDAILFSLN…LLEALDNLNP (536 aa). Residues 64-171 are disordered; sequence IQQKVNEPSG…KHKVTLPTVS (108 aa). Basic and acidic residues-rich tracts occupy residues 73 to 98, 126 to 138, and 147 to 163; these read GESRKTSTDALRGDPKVVDDEADAKP, THNKDGNGHKSHQ, and GESKGNDEEGEHAEQKH. N-linked (GlcNAc...) asparagine glycans are attached at residues Asn-172, Asn-375, and Asn-443.

The protein belongs to the glycosyltransferase 61 family.

The protein localises to the golgi apparatus membrane. It functions in the pathway glycan metabolism. Its function is as follows. Glycosyltransferase involved in the arabinosylation of xylan, the major hemicellulose (non-cellulosic component) of primary and secondary walls of angiosperms. Possesses alpha-1,3-arabinosyltransferase activity, transferring an arabinofuranose residue to the xylan backbone. The polypeptide is Alpha-1,3-arabinosyltransferase XAT3 (Oryza sativa subsp. japonica (Rice)).